The primary structure comprises 450 residues: NAD-specific glutamate dehydrogenase (450 aa).

Substrate contacts are provided by lysine 90, glutamine 111, and lysine 114. Lysine 126 (proton donor) is an active-site residue. Glycine 165 provides a ligand contact to substrate. NAD(+)-binding residues include threonine 210 and asparagine 241. Residue serine 381 coordinates substrate.

It belongs to the Glu/Leu/Phe/Val dehydrogenases family. Homohexamer.

The catalysed reaction is L-glutamate + NAD(+) + H2O = 2-oxoglutarate + NH4(+) + NADH + H(+). Its pathway is amino-acid degradation; L-glutamate degradation via hydroxyglutarate pathway; crotonoyl-CoA from L-glutamate: step 1/5. This is NAD-specific glutamate dehydrogenase (gdh) from Clostridium symbiosum (Bacteroides symbiosus).